The primary structure comprises 315 residues: Serine/threonine-protein phosphatase PP2A catalytic subunit 3 (315 aa).

Residues D62, H64, D90, and N122 each contribute to the Mn(2+) site. The active-site Proton donor is the H123. Residues H172 and H247 each coordinate Mn(2+). The interval 294–315 (QFEPAPRENEPHTTRRVPDYFL) is disordered. Over residues 298-315 (APRENEPHTTRRVPDYFL) the composition is skewed to basic and acidic residues. Position 315 is a leucine methyl ester (L315).

The protein belongs to the PPP phosphatase family. PP-2A subfamily. Mn(2+) is required as a cofactor. Reversibly methyl esterified on Leu-315 by leucine carboxyl methyltransferase 1 (PPM1) and protein phosphatase methylesterase 1 (PPE1). Carboxyl methylation influences the affinity of the catalytic subunit for the different regulatory subunits, thereby modulating the PP2A holoenzyme's substrate specificity, enzyme activity and cellular localization.

The enzyme catalyses O-phospho-L-seryl-[protein] + H2O = L-seryl-[protein] + phosphate. The catalysed reaction is O-phospho-L-threonyl-[protein] + H2O = L-threonyl-[protein] + phosphate. The chain is Serine/threonine-protein phosphatase PP2A catalytic subunit 3 (Ppn3) from Paramecium tetraurelia.